The primary structure comprises 193 residues: dCTP deaminase, dUMP-forming (193 aa).

Residues 107–112 (RSSLGR), aspartate 125, 133–135 (TLE), glutamine 154, and tyrosine 168 contribute to the dCTP site. Glutamate 135 acts as the Proton donor/acceptor in catalysis. Positions 169 to 193 (AESSGKYHGDERPSPSKMHLDFCRG) are disordered. Positions 173 to 193 (GKYHGDERPSPSKMHLDFCRG) are enriched in basic and acidic residues.

This sequence belongs to the dCTP deaminase family. Homotrimer.

The catalysed reaction is dCTP + 2 H2O = dUMP + NH4(+) + diphosphate. It participates in pyrimidine metabolism; dUMP biosynthesis; dUMP from dCTP: step 1/1. Its function is as follows. Bifunctional enzyme that catalyzes both the deamination of dCTP to dUTP and the hydrolysis of dUTP to dUMP without releasing the toxic dUTP intermediate. The sequence is that of dCTP deaminase, dUMP-forming from Methanopyrus kandleri (strain AV19 / DSM 6324 / JCM 9639 / NBRC 100938).